Consider the following 398-residue polypeptide: Putative isocitrate lyase subunit B (398 aa).

It belongs to the isocitrate lyase/PEP mutase superfamily. Isocitrate lyase family. Mg(2+) is required as a cofactor.

It catalyses the reaction D-threo-isocitrate = glyoxylate + succinate. Its function is as follows. Together with AceAa, they could catalyze the formation of succinate and glyoxylate from isocitrate. This Mycobacterium tuberculosis (strain ATCC 25618 / H37Rv) protein is Putative isocitrate lyase subunit B (aceAb).